Consider the following 872-residue polypeptide: Leucine--tRNA ligase (872 aa).

Residues 42–52 (PYPSGSLHMGH) carry the 'HIGH' region motif. The 'KMSKS' region motif lies at 634–638 (TMSKS). Lysine 637 is an ATP binding site.

It belongs to the class-I aminoacyl-tRNA synthetase family.

It is found in the cytoplasm. The enzyme catalyses tRNA(Leu) + L-leucine + ATP = L-leucyl-tRNA(Leu) + AMP + diphosphate. In Nostoc sp. (strain PCC 7120 / SAG 25.82 / UTEX 2576), this protein is Leucine--tRNA ligase.